We begin with the raw amino-acid sequence, 200 residues long: NAD(P)H dehydrogenase (quinone) (200 aa).

In terms of domain architecture, Flavodoxin-like spans 4-191 (VLVLYYSSYG…DIARYQGKHV (188 aa)). Residues 10 to 15 (SSYGHV) and 79 to 81 (TRF) each bind FMN. Tyr-12 contacts NAD(+). Trp-99 serves as a coordination point for substrate. Residues 114–120 (STGTQHG) and His-135 each bind FMN.

Belongs to the WrbA family. The cofactor is FMN.

The catalysed reaction is a quinone + NADH + H(+) = a quinol + NAD(+). It catalyses the reaction a quinone + NADPH + H(+) = a quinol + NADP(+). This chain is NAD(P)H dehydrogenase (quinone), found in Burkholderia multivorans (strain ATCC 17616 / 249).